The primary structure comprises 685 residues: DNA ligase (685 aa).

Residues 39 to 43 (DGEYD), 88 to 89 (SL), and E119 contribute to the NAD(+) site. The active-site N6-AMP-lysine intermediate is the K121. NAD(+) contacts are provided by R142, E182, K302, and K326. 4 residues coordinate Zn(2+): C420, C423, C438, and C443. The BRCT domain maps to 606–685 (DNATFFSEKR…QTFLEHLDRG (80 aa)).

This sequence belongs to the NAD-dependent DNA ligase family. LigA subfamily. Mg(2+) serves as cofactor. It depends on Mn(2+) as a cofactor.

It catalyses the reaction NAD(+) + (deoxyribonucleotide)n-3'-hydroxyl + 5'-phospho-(deoxyribonucleotide)m = (deoxyribonucleotide)n+m + AMP + beta-nicotinamide D-nucleotide.. In terms of biological role, DNA ligase that catalyzes the formation of phosphodiester linkages between 5'-phosphoryl and 3'-hydroxyl groups in double-stranded DNA using NAD as a coenzyme and as the energy source for the reaction. It is essential for DNA replication and repair of damaged DNA. The polypeptide is DNA ligase (Desulforapulum autotrophicum (strain ATCC 43914 / DSM 3382 / VKM B-1955 / HRM2) (Desulfobacterium autotrophicum)).